Reading from the N-terminus, the 548-residue chain is Stretch-activated cation channel MID1 (548 aa).

An N-terminal signal peptide occupies residues 1 to 20 (MIVWQALFVVYCLFTTSIHG). The Extracellular portion of the chain corresponds to 21–341 (LFQDFNPFAN…YLTKKISNGD (321 aa)). N-linked (GlcNAc...) asparagine glycans are attached at residues asparagine 32, asparagine 70, asparagine 112, asparagine 125, asparagine 159, asparagine 175, asparagine 228, asparagine 238, asparagine 265, asparagine 282, asparagine 285, asparagine 291, and asparagine 324. The helical transmembrane segment at 342 to 358 (GLSSVGGILFSHVYFTT) threads the bilayer. Over 359-548 (RSTDVCSLIF…LMVIHPLDDT (190 aa)) the chain is Cytoplasmic.

Forms an oligomer with a molecular mass of 200 kDa by disulfide bonds. Interacts with CCH1 to form a Ca(2+) influx channel. In terms of processing, N-glycosylated.

The protein resides in the cell membrane. In terms of biological role, calcium-permeable, cation-selective stretch-activated channel (SAC) that functions together with CCH1 to mediate calcium entry into cells. Required during mating. Together with CCH1, essential for tolerance to iron stress, which leads to an increased oxidative poise, and to cold stress. The chain is Stretch-activated cation channel MID1 (MID1) from Saccharomyces cerevisiae (strain ATCC 204508 / S288c) (Baker's yeast).